The primary structure comprises 1755 residues: Transposon Ty1-GR3 Gag-Pol polyprotein (1755 aa).

3 stretches are compositionally biased toward polar residues: residues Met-1–Pro-10, Thr-48–Ser-60, and Gln-127–Phe-152. Disordered regions lie at residues Met-1 to Gln-93, Pro-126 to Pro-173, and Gly-352 to Thr-421. The span at Thr-153–Thr-165 shows a compositional bias: low complexity. Residues Asn-299–His-401 are RNA-binding. The segment covering Asn-402–Ser-418 has biased composition (low complexity). Ser-416 carries the phosphoserine modification. The active-site For protease activity; shared with dimeric partner is the Asp-461. An integrase-type zinc finger-like region spans residues Asn-583–Cys-640. The region spanning Asn-660–Pro-835 is the Integrase catalytic domain. Residues Asp-671 and Asp-736 each contribute to the Mg(2+) site. The segment at Ser-956 to Tyr-1172 is disordered. A compositionally biased stretch (low complexity) spans Ser-960–Thr-969. 2 stretches are compositionally biased toward polar residues: residues Ser-1005–Thr-1015 and Met-1031–Ser-1043. The segment covering Lys-1044 to Ser-1053 has biased composition (basic and acidic residues). 2 stretches are compositionally biased toward polar residues: residues Tyr-1054–Glu-1082 and Ser-1095–Leu-1106. The Bipartite nuclear localization signal motif lies at Lys-1178 to Arg-1212. In terms of domain architecture, Reverse transcriptase Ty1/copia-type spans Asn-1338–Gln-1476. Asp-1346, Asp-1427, Asp-1428, Asp-1610, Glu-1652, and Asp-1685 together coordinate Mg(2+). Positions Asp-1610 to Lys-1752 constitute an RNase H Ty1/copia-type domain.

In terms of assembly, the capsid protein forms a homotrimer, from which the VLPs are assembled. The protease is a homodimer, whose active site consists of two apposed aspartic acid residues. Initially, virus-like particles (VLPs) are composed of the structural unprocessed proteins Gag and Gag-Pol, and also contain the host initiator methionine tRNA (tRNA(i)-Met) which serves as a primer for minus-strand DNA synthesis, and a dimer of genomic Ty RNA. Processing of the polyproteins occurs within the particle and proceeds by an ordered pathway, called maturation. First, the protease (PR) is released by autocatalytic cleavage of the Gag-Pol polyprotein yielding capsid protein p45 and a Pol-p154 precursor protein. This cleavage is a prerequisite for subsequent processing of Pol-p154 at the remaining sites to release the mature structural and catalytic proteins. Maturation takes place prior to the RT reaction and is required to produce transposition-competent VLPs.

It localises to the cytoplasm. The protein localises to the nucleus. It carries out the reaction DNA(n) + a 2'-deoxyribonucleoside 5'-triphosphate = DNA(n+1) + diphosphate. The enzyme catalyses Endonucleolytic cleavage to 5'-phosphomonoester.. Capsid protein (CA) is the structural component of the virus-like particle (VLP), forming the shell that encapsulates the retrotransposons dimeric RNA genome. The particles are assembled from trimer-clustered units and there are holes in the capsid shells that allow for the diffusion of macromolecules. CA also has nucleocapsid-like chaperone activity, promoting primer tRNA(i)-Met annealing to the multipartite primer-binding site (PBS), dimerization of Ty1 RNA and initiation of reverse transcription. Functionally, the aspartyl protease (PR) mediates the proteolytic cleavages of the Gag and Gag-Pol polyproteins after assembly of the VLP. Its function is as follows. Reverse transcriptase/ribonuclease H (RT) is a multifunctional enzyme that catalyzes the conversion of the retro-elements RNA genome into dsDNA within the VLP. The enzyme displays a DNA polymerase activity that can copy either DNA or RNA templates, and a ribonuclease H (RNase H) activity that cleaves the RNA strand of RNA-DNA heteroduplexes during plus-strand synthesis and hydrolyzes RNA primers. The conversion leads to a linear dsDNA copy of the retrotransposon that includes long terminal repeats (LTRs) at both ends. In terms of biological role, integrase (IN) targets the VLP to the nucleus, where a subparticle preintegration complex (PIC) containing at least integrase and the newly synthesized dsDNA copy of the retrotransposon must transit the nuclear membrane. Once in the nucleus, integrase performs the integration of the dsDNA into the host genome. The sequence is that of Transposon Ty1-GR3 Gag-Pol polyprotein (TY1B-GR3) from Saccharomyces cerevisiae (strain ATCC 204508 / S288c) (Baker's yeast).